The primary structure comprises 491 residues: Katanin p60 ATPase-containing subunit A1 (491 aa).

An interaction with KATNB1 region spans residues 1 to 29 (MSLLMISENVKLAREYALLGNYDSAMVYY). The interval 1 to 75 (MSLLMISENV…VKDIMKTLES (75 aa)) is interaction with dynein and NDEL1. The interaction with microtubules stretch occupies residues 1-185 (MSLLMISENV…EPETNKFDST (185 aa)). 2 positions are modified to phosphoserine; by DYRK2: S42 and S109. The tract at residues 87-185 (QHDLPASEGE…EPETNKFDST (99 aa)) is disordered. T133 carries the phosphothreonine; by DYRK2 modification. The span at 145–169 (HNDRGKAVRCREKKEQNKGREEKNK) shows a compositional bias: basic and acidic residues. At S170 the chain carries Phosphoserine. 249–256 (GPPGTGKT) lines the ATP pocket.

Belongs to the AAA ATPase family. Katanin p60 subunit A1 subfamily. As to quaternary structure, can homooligomerize into hexameric rings, which may be promoted by interaction with microtubules. Interacts with KATNB1, which may serve as a targeting subunit. Interacts with ASPM; the katanin complex formation KATNA1:KATNB1 is required for the association of ASPM Interacts with dynein and NDEL1. Associates with the E3 ligase complex containing DYRK2, EDD/UBR5, DDB1 and DCAF1 proteins (EDVP complex). Interacts with KLHL42 (via the kelch domains). Interacts with CUL3; the interaction is enhanced by KLHL42. Interacts with KATNB1 and KATNBL1. Interacts with CAMSAP2 and CAMSAP3; leading to regulate the length of CAMSAP-decorated microtubule stretches. Phosphorylation by DYRK2 triggers ubiquitination and subsequent degradation. In terms of processing, ubiquitinated by the BCR(KLHL42) E3 ubiquitin ligase complex, leading to its proteasomal degradation. Ubiquitinated by the EDVP E3 ligase complex and subsequently targeted for proteasomal degradation.

It localises to the cytoplasm. The protein resides in the midbody. It is found in the cytoskeleton. Its subcellular location is the microtubule organizing center. The protein localises to the centrosome. It localises to the spindle pole. The protein resides in the spindle. It carries out the reaction n ATP + n H2O + a microtubule = n ADP + n phosphate + (n+1) alpha/beta tubulin heterodimers.. With respect to regulation, ATPase activity is stimulated by microtubules, which promote homooligomerization. ATP-dependent microtubule severing is stimulated by interaction with KATNB1. Its function is as follows. Catalytic subunit of a complex which severs microtubules in an ATP-dependent manner. Microtubule severing may promote rapid reorganization of cellular microtubule arrays and the release of microtubules from the centrosome following nucleation. Microtubule release from the mitotic spindle poles may allow depolymerization of the microtubule end proximal to the spindle pole, leading to poleward microtubule flux and poleward motion of chromosome. Microtubule release within the cell body of neurons may be required for their transport into neuronal processes by microtubule-dependent motor proteins. This transport is required for axonal growth. The chain is Katanin p60 ATPase-containing subunit A1 from Macaca fascicularis (Crab-eating macaque).